The following is a 187-amino-acid chain: Elongation factor P (187 aa).

It belongs to the elongation factor P family.

The protein resides in the cytoplasm. Its pathway is protein biosynthesis; polypeptide chain elongation. Functionally, involved in peptide bond synthesis. Stimulates efficient translation and peptide-bond synthesis on native or reconstituted 70S ribosomes in vitro. Probably functions indirectly by altering the affinity of the ribosome for aminoacyl-tRNA, thus increasing their reactivity as acceptors for peptidyl transferase. This Mycobacterium marinum (strain ATCC BAA-535 / M) protein is Elongation factor P.